Reading from the N-terminus, the 396-residue chain is Elongation factor Tu 2 (396 aa).

The tr-type G domain occupies K10–E206. The segment at G19–T26 is G1. G19–T26 is a GTP binding site. T26 contacts Mg(2+). Residues G60–N64 are G2. The tract at residues D81–G84 is G3. GTP is bound by residues D81–H85 and N136–D139. The segment at N136–D139 is G4. Residues S174–L176 are G5.

It belongs to the TRAFAC class translation factor GTPase superfamily. Classic translation factor GTPase family. EF-Tu/EF-1A subfamily. In terms of assembly, monomer.

Its subcellular location is the cytoplasm. It catalyses the reaction GTP + H2O = GDP + phosphate + H(+). In terms of biological role, GTP hydrolase that promotes the GTP-dependent binding of aminoacyl-tRNA to the A-site of ribosomes during protein biosynthesis. The protein is Elongation factor Tu 2 of Psychrobacter sp. (strain PRwf-1).